The chain runs to 243 residues: MRIDVLSLFPDMFAPMRQSIIGKAIDKGALDFQVTDFRDFTENKHNNVDDYPFGGGAGMLLTPQPIFDAMASVEKQAGGKGRVILLDPAGRQFNHEVAQELATYDHLTFVAGHYEGYDERIRELVDDEISLGDYVLTGGELGAMVIIDATVRFLPEILGNAASAEGDSFEDGLLEFPQYTRPADFRGRMVPEVLTSGNHAKIAEWRLKESLRRTYLRRPDLLEKRQLTQQERDLLDNIKSEEQ.

Residues G112 and 131-136 (LGDYVL) each bind S-adenosyl-L-methionine.

Belongs to the RNA methyltransferase TrmD family. Homodimer.

The protein resides in the cytoplasm. The catalysed reaction is guanosine(37) in tRNA + S-adenosyl-L-methionine = N(1)-methylguanosine(37) in tRNA + S-adenosyl-L-homocysteine + H(+). Its function is as follows. Specifically methylates guanosine-37 in various tRNAs. The chain is tRNA (guanine-N(1)-)-methyltransferase from Leuconostoc mesenteroides subsp. mesenteroides (strain ATCC 8293 / DSM 20343 / BCRC 11652 / CCM 1803 / JCM 6124 / NCDO 523 / NBRC 100496 / NCIMB 8023 / NCTC 12954 / NRRL B-1118 / 37Y).